Consider the following 322-residue polypeptide: Adenine deaminase (322 aa).

The Zn(2+) site is built by H11, H13, and H189. The Proton donor role is filled by E192. Zn(2+) is bound at residue D270. D271 contributes to the substrate binding site.

This sequence belongs to the metallo-dependent hydrolases superfamily. Adenosine and AMP deaminases family. Adenine deaminase type 2 subfamily. Zn(2+) serves as cofactor.

It carries out the reaction adenine + H2O + H(+) = hypoxanthine + NH4(+). Catalyzes the hydrolytic deamination of adenine to hypoxanthine. Plays an important role in the purine salvage pathway and in nitrogen catabolism. This chain is Adenine deaminase, found in Rhizobium leguminosarum bv. trifolii (strain WSM2304).